The primary structure comprises 273 residues: Ribosomal RNA small subunit methyltransferase A (273 aa).

N18, L20, G45, E66, D91, and N113 together coordinate S-adenosyl-L-methionine.

This sequence belongs to the class I-like SAM-binding methyltransferase superfamily. rRNA adenine N(6)-methyltransferase family. RsmA subfamily.

The protein localises to the cytoplasm. It carries out the reaction adenosine(1518)/adenosine(1519) in 16S rRNA + 4 S-adenosyl-L-methionine = N(6)-dimethyladenosine(1518)/N(6)-dimethyladenosine(1519) in 16S rRNA + 4 S-adenosyl-L-homocysteine + 4 H(+). Its function is as follows. Specifically dimethylates two adjacent adenosines (A1518 and A1519) in the loop of a conserved hairpin near the 3'-end of 16S rRNA in the 30S particle. May play a critical role in biogenesis of 30S subunits. The chain is Ribosomal RNA small subunit methyltransferase A from Shigella boydii serotype 18 (strain CDC 3083-94 / BS512).